A 1944-amino-acid chain; its full sequence is Anaphase-promoting complex subunit 1 (1944 aa).

Phosphoserine is present on residues Ser51 and Ser60. Phosphothreonine is present on Thr291. The segment at 312–343 (ESPVASPFQNYSSIHSQSRSTSSPSLHSRSPS) is disordered. Residues Ser313, Ser341, Ser343, Ser355, Ser362, Ser373, and Ser377 each carry the phosphoserine modification. Residues 323 to 343 (SSIHSQSRSTSSPSLHSRSPS) are compositionally biased toward low complexity. A disordered region spans residues 370–395 (NLSSHSQSPKRHSISHSPSGSFNDSF). The span at 384-393 (SHSPSGSFND) shows a compositional bias: polar residues. Thr537 is subject to Phosphothreonine. 2 positions are modified to phosphoserine: Ser547 and Ser555. Tyr571 is modified (phosphotyrosine). Phosphoserine is present on residues Ser680, Ser686, and Ser688. Residues 991–1014 (NLPRGKSVLSSEVSSGTEAEEEDD) form a disordered region. A compositionally biased stretch (polar residues) spans 998–1007 (VLSSEVSSGT). PC repeat units lie at residues 1297–1325 (AAGL…PEQL), 1366–1404 (GATL…PEFL), 1467–1501 (GACL…YLSA), and 1520–1552 (LLSL…EMNY).

Belongs to the APC1 family. The mammalian APC/C is composed at least of 14 distinct subunits ANAPC1, ANAPC2, CDC27/APC3, ANAPC4, ANAPC5, CDC16/APC6, ANAPC7, CDC23/APC8, ANAPC10, ANAPC11, CDC26/APC12, ANAPC13, ANAPC15 and ANAPC16 that assemble into a complex of at least 19 chains with a combined molecular mass of around 1.2 MDa; APC/C interacts with FZR1 and FBXO5. Post-translationally, phosphorylated. Phosphorylation on Ser-355 occurs specifically during mitosis. In terms of tissue distribution, abundantly expressed in proliferating fibroblasts, juvenile testis, adult brain and epididymis.

It participates in protein modification; protein ubiquitination. Functionally, component of the anaphase promoting complex/cyclosome (APC/C), a cell cycle-regulated E3 ubiquitin ligase that controls progression through mitosis and the G1 phase of the cell cycle. The APC/C complex acts by mediating ubiquitination and subsequent degradation of target proteins: it mainly mediates the formation of 'Lys-11'-linked polyubiquitin chains and, to a lower extent, the formation of 'Lys-48'- and 'Lys-63'-linked polyubiquitin chains. The APC/C complex catalyzes assembly of branched 'Lys-11'-/'Lys-48'-linked branched ubiquitin chains on target proteins. In Mus musculus (Mouse), this protein is Anaphase-promoting complex subunit 1 (Anapc1).